The sequence spans 354 residues: Protein RecA (354 aa).

65–72 (GPESSGKT) provides a ligand contact to ATP.

The protein belongs to the RecA family.

Its subcellular location is the cytoplasm. Its function is as follows. Can catalyze the hydrolysis of ATP in the presence of single-stranded DNA, the ATP-dependent uptake of single-stranded DNA by duplex DNA, and the ATP-dependent hybridization of homologous single-stranded DNAs. It interacts with LexA causing its activation and leading to its autocatalytic cleavage. This Pseudomonas savastanoi pv. phaseolicola (strain 1448A / Race 6) (Pseudomonas syringae pv. phaseolicola (strain 1448A / Race 6)) protein is Protein RecA.